Reading from the N-terminus, the 501-residue chain is Probable cytosol aminopeptidase (501 aa).

Mn(2+) is bound by residues Lys257 and Asp262. Lys269 is an active-site residue. 3 residues coordinate Mn(2+): Asp281, Asp341, and Glu343. Residue Arg345 is part of the active site.

The protein belongs to the peptidase M17 family. Mn(2+) serves as cofactor.

It localises to the cytoplasm. The enzyme catalyses Release of an N-terminal amino acid, Xaa-|-Yaa-, in which Xaa is preferably Leu, but may be other amino acids including Pro although not Arg or Lys, and Yaa may be Pro. Amino acid amides and methyl esters are also readily hydrolyzed, but rates on arylamides are exceedingly low.. It catalyses the reaction Release of an N-terminal amino acid, preferentially leucine, but not glutamic or aspartic acids.. Presumably involved in the processing and regular turnover of intracellular proteins. Catalyzes the removal of unsubstituted N-terminal amino acids from various peptides. The polypeptide is Probable cytosol aminopeptidase (Synechococcus sp. (strain RCC307)).